A 157-amino-acid polypeptide reads, in one-letter code: Large ribosomal subunit protein eL24 (157 aa).

Residue lysine 2 forms a Glycyl lysine isopeptide (Lys-Gly) (interchain with G-Cter in SUMO2) linkage. An ADP-ribosyl glutamic acid modification is found at glutamate 4. N6-acetyllysine; alternate is present on lysine 27. Lysine 27 participates in a covalent cross-link: Glycyl lysine isopeptide (Lys-Gly) (interchain with G-Cter in SUMO2); alternate. Lysine 35 is covalently cross-linked (Glycyl lysine isopeptide (Lys-Gly) (interchain with G-Cter in SUMO2)). At lysine 77 the chain carries N6-acetyllysine. Threonine 83 carries the post-translational modification Phosphothreonine. Phosphoserine is present on serine 86. Lysine 93 carries the N6-acetyllysine modification. The span at glutamate 106–lysine 117 shows a compositional bias: basic and acidic residues. The disordered stretch occupies residues glutamate 106 to arginine 157. Low complexity predominate over residues lysine 123–glutamine 140. Lysine 131 is modified (N6-succinyllysine). Lysine 147 participates in a covalent cross-link: Glycyl lysine isopeptide (Lys-Gly) (interchain with G-Cter in SUMO2). Serine 149 is subject to Phosphoserine.

This sequence belongs to the eukaryotic ribosomal protein eL24 family. As to quaternary structure, component of the large ribosomal subunit. Post-translationally, mono-ADP-ribosylation at Glu-4 by PARP16 inhibits polysome assembly and mRNA loading, thereby inhibiting protein translation.

The protein resides in the cytoplasm. In terms of biological role, component of the large ribosomal subunit. The ribosome is a large ribonucleoprotein complex responsible for the synthesis of proteins in the cell. The polypeptide is Large ribosomal subunit protein eL24 (RPL24) (Bos taurus (Bovine)).